The chain runs to 368 residues: Alanine racemase (368 aa).

Lys-40 serves as the catalytic Proton acceptor; specific for D-alanine. Lys-40 carries the N6-(pyridoxal phosphate)lysine modification. Arg-136 is a binding site for substrate. Catalysis depends on Tyr-263, which acts as the Proton acceptor; specific for L-alanine. Met-310 is a substrate binding site.

Belongs to the alanine racemase family. Requires pyridoxal 5'-phosphate as cofactor.

The enzyme catalyses L-alanine = D-alanine. It functions in the pathway amino-acid biosynthesis; D-alanine biosynthesis; D-alanine from L-alanine: step 1/1. Functionally, catalyzes the interconversion of L-alanine and D-alanine. May also act on other amino acids. The chain is Alanine racemase (alr) from Streptococcus uberis (strain ATCC BAA-854 / 0140J).